A 257-amino-acid chain; its full sequence is tRNA pseudouridine synthase A (257 aa).

Catalysis depends on Asp53, which acts as the Nucleophile. Residue Tyr111 participates in substrate binding.

Belongs to the tRNA pseudouridine synthase TruA family. Homodimer.

The catalysed reaction is uridine(38/39/40) in tRNA = pseudouridine(38/39/40) in tRNA. Its function is as follows. Formation of pseudouridine at positions 38, 39 and 40 in the anticodon stem and loop of transfer RNAs. The chain is tRNA pseudouridine synthase A from Xanthomonas euvesicatoria pv. vesicatoria (strain 85-10) (Xanthomonas campestris pv. vesicatoria).